Here is a 385-residue protein sequence, read N- to C-terminus: Putative type I restriction enzyme specificity subunit S.HindORF215P (385 aa).

The protein belongs to the type-I restriction system S methylase family.

In terms of biological role, a putative specificity subunit for a type I restriction enzyme; the corresponding endonuclease and methylase subunits have multiple frameshifts and are probably not expressed. The sequence is that of Putative type I restriction enzyme specificity subunit S.HindORF215P from Haemophilus influenzae (strain ATCC 51907 / DSM 11121 / KW20 / Rd).